We begin with the raw amino-acid sequence, 199 residues long: Elongation factor Ts (199 aa).

The segment at 80–83 is involved in Mg(2+) ion dislocation from EF-Tu; the sequence is TDFV.

The protein belongs to the EF-Ts family.

The protein resides in the cytoplasm. In terms of biological role, associates with the EF-Tu.GDP complex and induces the exchange of GDP to GTP. It remains bound to the aminoacyl-tRNA.EF-Tu.GTP complex up to the GTP hydrolysis stage on the ribosome. This chain is Elongation factor Ts, found in Thermodesulfovibrio yellowstonii (strain ATCC 51303 / DSM 11347 / YP87).